A 457-amino-acid polypeptide reads, in one-letter code: tRNA (guanine(37)-N(1))-methyltransferase (457 aa).

Residues H240, 278–279 (DL), 306–307 (DG), and N338 contribute to the S-adenosyl-L-methionine site.

The protein belongs to the class I-like SAM-binding methyltransferase superfamily. TRM5/TYW2 family. In terms of assembly, monomer.

The protein resides in the mitochondrion matrix. It localises to the nucleus. The protein localises to the cytoplasm. The catalysed reaction is guanosine(37) in tRNA + S-adenosyl-L-methionine = N(1)-methylguanosine(37) in tRNA + S-adenosyl-L-homocysteine + H(+). Its function is as follows. Specifically methylates the N1 position of guanosine-37 in various cytoplasmic and mitochondrial tRNAs. Methylation is not dependent on the nature of the nucleoside 5' of the target nucleoside. This is the first step in the biosynthesis of wybutosine (yW), a modified base adjacent to the anticodon of tRNAs and required for accurate decoding. This is tRNA (guanine(37)-N(1))-methyltransferase from Drosophila melanogaster (Fruit fly).